The sequence spans 607 residues: Albumin (607 aa).

A signal peptide spans 1–18; that stretch reads MKWVTFVSLLFLFSSAYS. Residues 19–24 constitute a propeptide that is removed on maturation; it reads RGVLRR. 3 consecutive Albumin domains span residues 19 to 209, 210 to 402, and 403 to 600; these read RGVL…DALK, ERIL…QFTP, and LVEE…KLVA. His-27 contacts Cu cation. Residue Ser-29 is modified to Phosphoserine. Positions 30 and 37 each coordinate Ca(2+). A disulfide bond links Cys-77 and Cys-86. Phosphoserine occurs at positions 82 and 89. Zn(2+) is bound at residue His-91. 6 disulfides stabilise this stretch: Cys-99-Cys-115, Cys-114-Cys-125, Cys-147-Cys-192, Cys-191-Cys-200, Cys-223-Cys-269, and Cys-268-Cys-276. Residue Thr-107 is modified to Phosphothreonine. Glu-267 is a binding site for Ca(2+). Residues His-270 and Asp-272 each coordinate Zn(2+). Asp-272, Glu-275, Asp-278, and Asp-282 together coordinate Ca(2+). 8 disulfides stabilise this stretch: Cys-288–Cys-302, Cys-301–Cys-312, Cys-339–Cys-384, Cys-383–Cys-392, Cys-415–Cys-461, Cys-460–Cys-471, Cys-484–Cys-500, and Cys-499–Cys-510. The residue at position 442 (Ser-442) is a Phosphoserine. A phosphothreonine mark is found at Thr-443 and Thr-445. Position 512 is a phosphoserine (Ser-512). Disulfide bonds link Cys-537–Cys-582 and Cys-581–Cys-590. Residue Lys-557 is modified to N6-methyllysine. Phosphothreonine is present on Thr-569. Lys-587 bears the N6-succinyllysine mark.

This sequence belongs to the ALB/AFP/VDB family. Interacts with FCGRT; this interaction regulates ALB homeostasis. Interacts with TASOR. In plasma, occurs in a covalently-linked complex with chromophore-bound alpha-1-microglobulin; this interaction does not prevent fatty acid binding to ALB. Post-translationally, phosphorylated by FAM20C in the extracellular medium. In terms of tissue distribution, plasma.

Its subcellular location is the secreted. Functionally, binds water, Ca(2+), Na(+), K(+), fatty acids, hormones, bilirubin and drugs. Its main function is the regulation of the colloidal osmotic pressure of blood. Major zinc transporter in plasma, typically binds about 80% of all plasma zinc. Major calcium and magnesium transporter in plasma, binds approximately 45% of circulating calcium and magnesium in plasma. Potentially has more than two calcium-binding sites and might additionally bind calcium in a non-specific manner. The shared binding site between zinc and calcium at residue Asp-272 suggests a crosstalk between zinc and calcium transport in the blood. The rank order of affinity is zinc &gt; calcium &gt; magnesium. Binds to the bacterial siderophore enterobactin and inhibits enterobactin-mediated iron uptake of E.coli from ferric transferrin, and may thereby limit the utilization of iron and growth of enteric bacteria such as E.coli. Does not prevent iron uptake by the bacterial siderophore aerobactin. The chain is Albumin (ALB) from Equus caballus (Horse).